The chain runs to 437 residues: GTPase Der (437 aa).

EngA-type G domains are found at residues 3–168 (PLIA…PCPE) and 178–353 (IKLA…LNRR). GTP-binding positions include 9–16 (GRPNVGKS), 56–60 (DTGGY), 120–123 (NKVD), 184–191 (GRPNVGKS), 231–235 (DTAGL), and 296–299 (NKWD). Positions 354-437 (QKISTSNLNR…IPITMRFLRK (84 aa)) constitute a KH-like domain.

This sequence belongs to the TRAFAC class TrmE-Era-EngA-EngB-Septin-like GTPase superfamily. EngA (Der) GTPase family. In terms of assembly, associates with the 50S ribosomal subunit.

Its function is as follows. GTPase that plays an essential role in the late steps of ribosome biogenesis. This is GTPase Der from Chlorobaculum tepidum (strain ATCC 49652 / DSM 12025 / NBRC 103806 / TLS) (Chlorobium tepidum).